Here is a 512-residue protein sequence, read N- to C-terminus: Kelch repeat protein C2 (512 aa).

The 66-residue stretch at 2–67 folds into the BTB domain; that stretch reads ESVIFSINGE…MRWKKINITI (66 aa). Kelch repeat units lie at residues 216–261, 262–307, 309–354, 356–403, 405–449, and 452–498; these read IKHN…LHNC, LYII…VNDG, LYVI…FVND, IYVM…EYDG, IYVI…SCGD, and LIIA…THKS.

It belongs to the poxviruses Kelch family.

The sequence is that of Kelch repeat protein C2 from Vaccinia virus (strain Copenhagen) (VACV).